A 359-amino-acid polypeptide reads, in one-letter code: Phosphoserine aminotransferase (359 aa).

The L-glutamate site is built by serine 9 and arginine 42. Residues 76-77, tryptophan 102, threonine 152, aspartate 171, and glutamine 194 each bind pyridoxal 5'-phosphate; that span reads AS. N6-(pyridoxal phosphate)lysine is present on lysine 195. 236-237 is a binding site for pyridoxal 5'-phosphate; the sequence is NT.

It belongs to the class-V pyridoxal-phosphate-dependent aminotransferase family. SerC subfamily. Homodimer. Requires pyridoxal 5'-phosphate as cofactor.

Its subcellular location is the cytoplasm. It catalyses the reaction O-phospho-L-serine + 2-oxoglutarate = 3-phosphooxypyruvate + L-glutamate. The catalysed reaction is 4-(phosphooxy)-L-threonine + 2-oxoglutarate = (R)-3-hydroxy-2-oxo-4-phosphooxybutanoate + L-glutamate. Its pathway is amino-acid biosynthesis; L-serine biosynthesis; L-serine from 3-phospho-D-glycerate: step 2/3. It participates in cofactor biosynthesis; pyridoxine 5'-phosphate biosynthesis; pyridoxine 5'-phosphate from D-erythrose 4-phosphate: step 3/5. Catalyzes the reversible conversion of 3-phosphohydroxypyruvate to phosphoserine and of 3-hydroxy-2-oxo-4-phosphonooxybutanoate to phosphohydroxythreonine. The sequence is that of Phosphoserine aminotransferase from Marinomonas sp. (strain MWYL1).